A 309-amino-acid chain; its full sequence is Taste receptor type 2 member 31 (309 aa).

The Extracellular portion of the chain corresponds to 1–2 (MT). The helical transmembrane segment at 3–23 (TFIPIIFSSLVVVIFVIGNFA) threads the bilayer. Residues 24-55 (NGFIALVNSIEWFKRQKISFADQILTALAVSR) lie on the Cytoplasmic side of the membrane. The helical transmembrane segment at 56 to 76 (VGLLWVLLLNWYSTVLNPAFY) threads the bilayer. Residues 77–100 (SVEVRTTAYNVWAVTGHFSNWLAT) lie on the Extracellular side of the membrane. The helical transmembrane segment at 101-121 (SLSIFYLLKIANFSNLIFLHL) threads the bilayer. Topologically, residues 122-126 (KRRVK) are cytoplasmic. The chain crosses the membrane as a helical span at residues 127–147 (SVILVMLLGPLLFLACQLFMI). The Extracellular segment spans residues 148-181 (NMKEIVRTKEYEGNMTWKIKLRSAVYLSDATVTT). The N-linked (GlcNAc...) asparagine glycan is linked to N161. Residues 182–202 (LGNLVPFTLTLLCFLLLICSL) form a helical membrane-spanning segment. Residues 203–229 (CKHLKKMQLHGKGSQDPSTKVHIKVLQ) lie on the Cytoplasmic side of the membrane. Residues 230–250 (TVISFLLLCAIYFLSIMISVW) traverse the membrane as a helical segment. Topologically, residues 251-259 (SFGSLKNKP) are extracellular. Residues 260–280 (VFMFCKAMRFSYPSIHPFILI) form a helical membrane-spanning segment. Over 281-309 (WGNKKLKQTFLSVLRQVRYWVKGEKPSSP) the chain is Cytoplasmic.

It belongs to the G-protein coupled receptor T2R family.

The protein localises to the membrane. Its function is as follows. Receptor that may play a role in the perception of bitterness and is gustducin-linked. May play a role in sensing the chemical composition of the gastrointestinal content. The activity of this receptor may stimulate alpha gustducin, mediate PLC-beta-2 activation and lead to the gating of TRPM5. The chain is Taste receptor type 2 member 31 (TAS2R31) from Pan troglodytes (Chimpanzee).